The sequence spans 137 residues: Cucumber peeling cupredoxin (137 aa).

A Pyrrolidone carboxylic acid modification is found at Gln-1. One can recognise a Phytocyanin domain in the interval 3–107 (TVHIVGDNTG…GQKLSINVVA (105 aa)). 4 residues coordinate Cu cation: His-46, Cys-89, His-94, and Gln-99. Cys-60 and Cys-95 are joined by a disulfide. Asn-109 carries N-linked (GlcNAc...) asparagine glycosylation. Positions 112-137 (VSMPPPSSSPPSSVMPPPVMPPPSPS) are disordered. Pro residues predominate over residues 114–137 (MPPPSSSPPSSVMPPPVMPPPSPS). Position 115 is a 4-hydroxyproline; partial (Pro-115). Pro-116, Pro-117, Pro-121, and Pro-122 each carry 4-hydroxyproline. Pro-127 bears the 4-hydroxyproline; partial mark. Residues Pro-128, Pro-129, Pro-133, Pro-134, and Pro-136 each carry the 4-hydroxyproline modification.

In Cucumis sativus (Cucumber), this protein is Cucumber peeling cupredoxin.